A 404-amino-acid polypeptide reads, in one-letter code: Chorismate synthase (404 aa).

Positions 40 and 46 each coordinate NADP(+). Residues 133–135, 266–267, Gly313, 328–332, and Arg354 contribute to the FMN site; these read RSS, QA, and KPIPT. Residues 283–320 form a disordered region; the sequence is PGSQVHDPIEPREDGAQAYPRRTNHAGGTEGGTTTGMP. The disordered stretch occupies residues 337–357; it reads LDSVDTATGEPEPTRYERSDI.

This sequence belongs to the chorismate synthase family. Homotetramer. Requires FMNH2 as cofactor.

The enzyme catalyses 5-O-(1-carboxyvinyl)-3-phosphoshikimate = chorismate + phosphate. The protein operates within metabolic intermediate biosynthesis; chorismate biosynthesis; chorismate from D-erythrose 4-phosphate and phosphoenolpyruvate: step 7/7. Its function is as follows. Catalyzes the anti-1,4-elimination of the C-3 phosphate and the C-6 proR hydrogen from 5-enolpyruvylshikimate-3-phosphate (EPSP) to yield chorismate, which is the branch point compound that serves as the starting substrate for the three terminal pathways of aromatic amino acid biosynthesis. This reaction introduces a second double bond into the aromatic ring system. The polypeptide is Chorismate synthase (Salinibacter ruber (strain DSM 13855 / M31)).